Consider the following 587-residue polypeptide: Phosphomethylpyrimidine synthase (587 aa).

A disordered region spans residues 1 to 58 (MTPTQNEIHPKHSYSPIRKDGLEVPETEIRLDDSPSGPNEPFRIYRTRGPETNPKQGL). Residues 17 to 33 (IRKDGLEVPETEIRLDD) show a composition bias toward basic and acidic residues. Substrate contacts are provided by residues Asn180, Met209, Tyr238, His274, 294–296 (SRG), 335–338 (DGLR), and Glu374. His378 lines the Zn(2+) pocket. A substrate-binding site is contributed by Tyr401. His442 is a binding site for Zn(2+). Cys522, Cys525, and Cys530 together coordinate [4Fe-4S] cluster.

Belongs to the ThiC family. The cofactor is [4Fe-4S] cluster.

It carries out the reaction 5-amino-1-(5-phospho-beta-D-ribosyl)imidazole + S-adenosyl-L-methionine = 4-amino-2-methyl-5-(phosphooxymethyl)pyrimidine + CO + 5'-deoxyadenosine + formate + L-methionine + 3 H(+). The protein operates within cofactor biosynthesis; thiamine diphosphate biosynthesis. Its function is as follows. Catalyzes the synthesis of the hydroxymethylpyrimidine phosphate (HMP-P) moiety of thiamine from aminoimidazole ribotide (AIR) in a radical S-adenosyl-L-methionine (SAM)-dependent reaction. The sequence is that of Phosphomethylpyrimidine synthase from Corynebacterium glutamicum (strain ATCC 13032 / DSM 20300 / JCM 1318 / BCRC 11384 / CCUG 27702 / LMG 3730 / NBRC 12168 / NCIMB 10025 / NRRL B-2784 / 534).